The following is a 389-amino-acid chain: 1-deoxy-D-xylulose 5-phosphate reductoisomerase (389 aa).

Threonine 10, glycine 11, serine 12, isoleucine 13, asparagine 38, and asparagine 122 together coordinate NADPH. Lysine 123 serves as a coordination point for 1-deoxy-D-xylulose 5-phosphate. Glutamate 124 is an NADPH binding site. Aspartate 148 provides a ligand contact to Mn(2+). 1-deoxy-D-xylulose 5-phosphate is bound by residues serine 149, glutamate 150, serine 173, and histidine 196. Glutamate 150 contacts Mn(2+). Glycine 202 provides a ligand contact to NADPH. Serine 209, asparagine 214, lysine 215, and glutamate 218 together coordinate 1-deoxy-D-xylulose 5-phosphate. A Mn(2+)-binding site is contributed by glutamate 218.

This sequence belongs to the DXR family. Requires Mg(2+) as cofactor. It depends on Mn(2+) as a cofactor.

The catalysed reaction is 2-C-methyl-D-erythritol 4-phosphate + NADP(+) = 1-deoxy-D-xylulose 5-phosphate + NADPH + H(+). It functions in the pathway isoprenoid biosynthesis; isopentenyl diphosphate biosynthesis via DXP pathway; isopentenyl diphosphate from 1-deoxy-D-xylulose 5-phosphate: step 1/6. Its function is as follows. Catalyzes the NADPH-dependent rearrangement and reduction of 1-deoxy-D-xylulose-5-phosphate (DXP) to 2-C-methyl-D-erythritol 4-phosphate (MEP). The sequence is that of 1-deoxy-D-xylulose 5-phosphate reductoisomerase from Wolbachia sp. subsp. Brugia malayi (strain TRS).